A 331-amino-acid polypeptide reads, in one-letter code: UDP-galactose/UDP-glucose transporter 3 (331 aa).

Helical transmembrane passes span 11 to 31, 49 to 69, 80 to 100, 112 to 132, 135 to 155, 170 to 190, 206 to 226, and 245 to 265; these read VLLL…QGIL, HLAF…YIMI, APWW…AMGI, VLAK…VYGI, TLPE…FALL, APLG…TNAT, IMLG…FGLP, and WDIL…FLTI. Residues 327–331 carry the Di-lysine motif motif; the sequence is KKKKA.

The protein belongs to the nucleotide-sugar transporter family. UDP-galactose:UMP antiporter (TC 2.A.7.11) subfamily. Mostly expressed in flowers, and, to a lower extent, in roots, stems and leaves.

It localises to the endoplasmic reticulum membrane. It is found in the golgi apparatus membrane. Its function is as follows. Essential sugar transporter required for the transport of UDP-glucose from the cytoplasm into the Golgi and the endoplasmic reticulum. Essential for pollen development and involved in embryo sac progress. The sequence is that of UDP-galactose/UDP-glucose transporter 3 from Arabidopsis thaliana (Mouse-ear cress).